We begin with the raw amino-acid sequence, 386 residues long: Erythronate-4-phosphate dehydrogenase (386 aa).

Substrate contacts are provided by serine 59 and threonine 81. Aspartate 162 contributes to the NAD(+) binding site. Residue arginine 239 is part of the active site. Position 262 (aspartate 262) interacts with NAD(+). The active site involves glutamate 267. Histidine 284 serves as the catalytic Proton donor. Glycine 287 is an NAD(+) binding site. Tyrosine 288 is a binding site for substrate.

This sequence belongs to the D-isomer specific 2-hydroxyacid dehydrogenase family. PdxB subfamily. As to quaternary structure, homodimer.

The protein localises to the cytoplasm. It carries out the reaction 4-phospho-D-erythronate + NAD(+) = (R)-3-hydroxy-2-oxo-4-phosphooxybutanoate + NADH + H(+). Its pathway is cofactor biosynthesis; pyridoxine 5'-phosphate biosynthesis; pyridoxine 5'-phosphate from D-erythrose 4-phosphate: step 2/5. In terms of biological role, catalyzes the oxidation of erythronate-4-phosphate to 3-hydroxy-2-oxo-4-phosphonooxybutanoate. This is Erythronate-4-phosphate dehydrogenase from Psychrobacter cryohalolentis (strain ATCC BAA-1226 / DSM 17306 / VKM B-2378 / K5).